The following is an 89-amino-acid chain: Putative protein T-ENOL (89 aa).

Disordered regions lie at residues 1-31 (MASTSARSGDKKDTWPIQAAASLGGGQKASL) and 54-89 (RSHMNPMPDKEKQTKDQGTQISRHVFFTKTRGTDTR).

Specifically expressed in testis (at protein level).

This Rattus norvegicus (Rat) protein is Putative protein T-ENOL.